Here is a 1601-residue protein sequence, read N- to C-terminus: Polycomb group protein Psc (1601 aa).

2 disordered regions span residues 1–91 (MMTP…TTTT) and 165–245 (NGIK…DLAT). Low complexity-rich tracts occupy residues 8-91 (AIQP…TTTT) and 182-198 (SSSS…SSSS). The segment covering 199-215 (WPTTRRATSEDASSNGG) has biased composition (polar residues). Positions 228–245 (TAAVAASSTATTTSDLAT) are enriched in low complexity. The segment at 263 to 302 (CHLCQGYLINATTIVECLHSFCHSCLINHLRKERFCPRCE) adopts an RING-type zinc-finger fold. Disordered regions lie at residues 561 to 693 (KREK…FSED), 711 to 856 (VESP…NRTP), 895 to 960 (IGGG…SNNY), 1011 to 1097 (YKYT…EKQQ), 1116 to 1315 (SITI…LAPK), 1330 to 1408 (NPAA…HPVM), and 1512 to 1601 (AATG…TKSK). The segment covering 567–590 (SPQMSSKSSSKSSPCTPVSSPSEP) has biased composition (low complexity). Residues 611–637 (DPERREIVKPLKPEKESRSKKKDKDGS) show a composition bias toward basic and acidic residues. The segment covering 638–649 (PKSSSSSSSSSS) has biased composition (low complexity). Phosphoserine occurs at positions 656 and 658. Over residues 676-689 (SGVSTLSPRVTSGA) the composition is skewed to polar residues. The span at 729 to 739 (SVQQSASPKSK) shows a compositional bias: low complexity. A compositionally biased stretch (pro residues) spans 812 to 822 (LMPPPAKPPML). Over residues 929 to 938 (TTPSQGNKNV) the composition is skewed to polar residues. The segment covering 1011–1022 (YKYTPKPTPNSG) has biased composition (low complexity). Over residues 1036–1045 (LGGGNGGSLG) the composition is skewed to gly residues. The span at 1069-1085 (SSATQSGGNNGIVNNNI) shows a compositional bias: low complexity. Polar residues predominate over residues 1116–1133 (SITISRDNGDSSSPNNGQ). Position 1139 is a phosphoserine (Ser1139). A compositionally biased stretch (pro residues) spans 1204–1217 (PQLPKVATPPPPSS). Phosphothreonine occurs at positions 1222, 1236, and 1251. Residues 1247 to 1258 (VDKKTPSPEKRT) show a composition bias toward basic and acidic residues. A phosphoserine mark is found at Ser1253, Ser1266, and Ser1274. Over residues 1261-1272 (QMGSHSPTASEN) the composition is skewed to polar residues. Polar residues-rich tracts occupy residues 1352-1375 (QSGQ…SPPA) and 1561-1587 (APQT…NNGA).

As to quaternary structure, component of PRC1 complex, which contains many PcG proteins like Pc, ph, Scm, Psc, Sce and also chromatin-remodeling proteins such as histone deacetylases. This complex is distinct from the Esc/E(z) complex, at least composed of esc, E(z), Su(z)12, HDAC1/Rpd3 and Caf1-55. The 2 complexes however cooperate and interact together during the first 3 hours of development to establish PcG silencing.

It localises to the nucleus. In terms of biological role, polycomb group (PcG) protein. PcG proteins act by forming multiprotein complexes, which are required to maintain the transcriptionally repressive state of homeotic genes throughout development. PcG proteins are not required to initiate repression, but to maintain it during later stages of development. Component of the PcG multiprotein PRC1 complex, a complex that acts via chromatin remodeling and modification of histones; it mediates monoubiquitination of histone H2A 'Lys-118', rendering chromatin heritably changed in its expressibility. Needed to maintain expression patterns of the homeotic selector genes of the Antennapedia (Antp-C) and Bithorax (BX-C) complexes, and hence for the maintenance of segmental determination. The chain is Polycomb group protein Psc (Psc) from Drosophila melanogaster (Fruit fly).